We begin with the raw amino-acid sequence, 516 residues long: Probable rhamnogalacturonase B (516 aa).

The signal sequence occupies residues 1–21 (MRLHAFTLLSLLGLVPSFAAA). Cys42 and Cys68 are oxidised to a cystine. A glycan (N-linked (GlcNAc...) asparagine) is linked at Asn145. Residue Asp219 is the Proton donor of the active site. Cys221 and Cys238 are oxidised to a cystine. A glycan (N-linked (GlcNAc...) asparagine) is linked at Asn239. His294 is a catalytic residue. Asn321 is a glycosylation site (N-linked (GlcNAc...) asparagine). Disulfide bonds link Cys344/Cys350 and Cys372/Cys381. Residues 462 to 516 (ETPAAASRSEQVVQGASQETSQPAPESAGPVRSVPTGGNRPSRHRHGHHHFWIAA) are disordered. Over residues 469 to 485 (RSEQVVQGASQETSQPA) the composition is skewed to polar residues. Over residues 502 to 516 (PSRHRHGHHHFWIAA) the composition is skewed to basic residues.

The protein belongs to the glycosyl hydrolase 28 family.

Its subcellular location is the secreted. It catalyses the reaction Endohydrolysis of alpha-D-GalA-(1-&gt;2)-alpha-L-Rha glycosidic bond in the rhamnogalacturonan I backbone with initial inversion of anomeric configuration releasing oligosaccharides with beta-D-GalA at the reducing end.. In terms of biological role, pectinolytic enzymes consist of four classes of enzymes: pectine lyase, polygalacturonase, pectin methylesterase and rhamnogalacturonase. Hydrolyzes alpha-D-galacturonopyranosyl-(1,2)-alpha-L-rhamnopyranosyl linkages in the backbone of the hairy regions of pectins. This chain is Probable rhamnogalacturonase B (rhgB), found in Neosartorya fischeri (strain ATCC 1020 / DSM 3700 / CBS 544.65 / FGSC A1164 / JCM 1740 / NRRL 181 / WB 181) (Aspergillus fischerianus).